The primary structure comprises 350 residues: Arabinogalactan endo-beta-1,4-galactanase (350 aa).

Positions 1-16 (MFASLLLAALPLLTHA) are cleaved as a signal peptide. Asn128 carries N-linked (GlcNAc...) asparagine glycosylation. Glu152 functions as the Proton donor in the catalytic mechanism. Residue Glu262 is the Nucleophile of the active site.

It belongs to the glycosyl hydrolase 53 family. In terms of processing, glycosylated.

It catalyses the reaction The enzyme specifically hydrolyzes (1-&gt;4)-beta-D-galactosidic linkages in type I arabinogalactans.. This Aspergillus aculeatus protein is Arabinogalactan endo-beta-1,4-galactanase (gal1).